Reading from the N-terminus, the 194-residue chain is Mitochondrial inner membrane protease ATP23 (194 aa).

The disordered stretch occupies residues 1-20; it reads MEDAAAPNSGSEFNPGARRG. Zn(2+) is bound at residue His96. Residue Glu97 is part of the active site. Position 100 (His100) interacts with Zn(2+).

The protein belongs to the peptidase M76 family.

It is found in the mitochondrion inner membrane. Has a dual role in the assembly of mitochondrial ATPase. Acts as a protease that removes the N-terminal 10 residues of mitochondrial ATPase CF(0) subunit 6 (ATP6) at the intermembrane space side. Also involved in the correct assembly of the membrane-embedded ATPase CF(0) particle, probably mediating association of ATP6 with the subunit 9 ring. This Arabidopsis thaliana (Mouse-ear cress) protein is Mitochondrial inner membrane protease ATP23.